The following is a 367-amino-acid chain: Dual-specificity RNA methyltransferase RlmN (367 aa).

Residue glutamate 91 is the Proton acceptor of the active site. Positions 102–337 (GKVRMTQCLS…AIIRKSKGQD (236 aa)) constitute a Radical SAM core domain. The cysteines at positions 109 and 342 are disulfide-linked. [4Fe-4S] cluster-binding residues include cysteine 116, cysteine 120, and cysteine 123. Residues 169 to 170 (GE), serine 201, 223 to 225 (SLH), and asparagine 299 each bind S-adenosyl-L-methionine. Cysteine 342 (S-methylcysteine intermediate) is an active-site residue.

It belongs to the radical SAM superfamily. RlmN family. [4Fe-4S] cluster is required as a cofactor.

Its subcellular location is the cytoplasm. The catalysed reaction is adenosine(2503) in 23S rRNA + 2 reduced [2Fe-2S]-[ferredoxin] + 2 S-adenosyl-L-methionine = 2-methyladenosine(2503) in 23S rRNA + 5'-deoxyadenosine + L-methionine + 2 oxidized [2Fe-2S]-[ferredoxin] + S-adenosyl-L-homocysteine. It catalyses the reaction adenosine(37) in tRNA + 2 reduced [2Fe-2S]-[ferredoxin] + 2 S-adenosyl-L-methionine = 2-methyladenosine(37) in tRNA + 5'-deoxyadenosine + L-methionine + 2 oxidized [2Fe-2S]-[ferredoxin] + S-adenosyl-L-homocysteine. Its function is as follows. Specifically methylates position 2 of adenine 2503 in 23S rRNA and position 2 of adenine 37 in tRNAs. m2A2503 modification seems to play a crucial role in the proofreading step occurring at the peptidyl transferase center and thus would serve to optimize ribosomal fidelity. In Nitratidesulfovibrio vulgaris (strain DSM 19637 / Miyazaki F) (Desulfovibrio vulgaris), this protein is Dual-specificity RNA methyltransferase RlmN.